Reading from the N-terminus, the 89-residue chain is Small ribosomal subunit protein uS15 (89 aa).

The protein belongs to the universal ribosomal protein uS15 family. As to quaternary structure, part of the 30S ribosomal subunit. Forms a bridge to the 50S subunit in the 70S ribosome, contacting the 23S rRNA.

Its function is as follows. One of the primary rRNA binding proteins, it binds directly to 16S rRNA where it helps nucleate assembly of the platform of the 30S subunit by binding and bridging several RNA helices of the 16S rRNA. Functionally, forms an intersubunit bridge (bridge B4) with the 23S rRNA of the 50S subunit in the ribosome. This chain is Small ribosomal subunit protein uS15, found in Mycolicibacterium smegmatis (strain ATCC 700084 / mc(2)155) (Mycobacterium smegmatis).